Consider the following 103-residue polypeptide: Large ribosomal subunit protein bL21 (103 aa).

Belongs to the bacterial ribosomal protein bL21 family. As to quaternary structure, part of the 50S ribosomal subunit. Contacts protein L20.

Functionally, this protein binds to 23S rRNA in the presence of protein L20. The sequence is that of Large ribosomal subunit protein bL21 from Thermobifida fusca (strain YX).